Consider the following 478-residue polypeptide: MLO-like protein 13 (478 aa).

Residues methionine 1–glutamate 10 are Extracellular-facing. A helical transmembrane segment spans residues tyrosine 11–alanine 31. Residues glutamate 32–glutamate 60 are Cytoplasmic-facing. Residues leucine 61–isoleucine 81 form a helical membrane-spanning segment. The Extracellular portion of the chain corresponds to cysteine 82–histidine 145. A helical membrane pass occupies residues isoleucine 146–glycine 166. Residues glycine 167 to lysine 276 lie on the Cytoplasmic side of the membrane. Transmembrane regions (helical) follow at residues valine 277–glycine 297 and glycine 298–alanine 318. The Cytoplasmic segment spans residues lysine 319 to glutamine 360. The chain crosses the membrane as a helical span at residues leucine 361–phenylalanine 381. At threonine 382 to leucine 400 the chain is on the extracellular side. Residues valine 401 to valine 421 traverse the membrane as a helical segment. Residues threonine 422 to proline 478 lie on the Cytoplasmic side of the membrane. Positions asparagine 435–serine 456 are calmodulin-binding. Basic and acidic residues predominate over residues arginine 449 to glutamate 462. Residues arginine 449–proline 478 form a disordered region. Over residues glutamine 464–proline 478 the composition is skewed to polar residues.

The protein belongs to the MLO family.

It is found in the membrane. Its function is as follows. May be involved in modulation of pathogen defense and leaf cell death. Activity seems to be regulated by Ca(2+)-dependent calmodulin binding and seems not to require heterotrimeric G proteins. This chain is MLO-like protein 13 (MLO13), found in Arabidopsis thaliana (Mouse-ear cress).